The sequence spans 430 residues: Transcription factor E2F1 (430 aa).

The cyclin A:CDK2 binding stretch occupies residues 62 to 103; that stretch reads ATPQAPRPAPSAPRPALGRPPVKRRLDLETDHQYLAGSSGPF. Residues 84–186 form an interaction with BIRC2/c-IAP1 region; that stretch reads KRRLDLETDH…KKSKNHIQWL (103 aa). Residues 95-123 form a disordered region; that stretch reads YLAGSSGPFRGRGRHPGKGVKSPGEKSRY. The DNA-binding element occupies 105–189; that stretch reads GRGRHPGKGV…KNHIQWLGSH (85 aa). N6-acetyllysine occurs at positions 112, 115, and 120. The tract at residues 148–169 is leucine-zipper; that stretch reads LNWAAEVLKVQKRRIYDITNVL. The DEF box motif lies at 153-189; that stretch reads EVLKVQKRRIYDITNVLEGIQLIAKKSKNHIQWLGSH. Lysine 180 bears the N6-methyllysine; by SETD7 mark. A required for interaction with TRIM28 region spans residues 187–375; the sequence is GSHTMVGIGK…QLSPLVAADS (189 aa). Positions 190–279 are dimerization; the sequence is TMVGIGKRLE…AVDSSETFQI (90 aa). Residues 294 to 340 form a disordered region; that stretch reads PEESADGISPGKTSCQETSSGEDRTADSGPAGPPPSPPSTSPALDPS. Residues 324-333 show a composition bias toward pro residues; that stretch reads AGPPPSPPST. Positions 361 to 430 are transactivation; it reads PMEEDQLSPL…DFGDLTPLDF (70 aa). Phosphoserine occurs at positions 368 and 396. The interval 402–419 is RB1 binding; that stretch reads LDYHFGLEEGEGIRDLFD. Threonine 426 is modified (phosphothreonine).

Belongs to the E2F/DP family. Component of the DRTF1/E2F transcription factor complex. Forms heterodimers with DP family members. The E2F1 complex binds specifically hypophosphorylated RB1, the interaction represses E2F1-driven transcription. During the cell cycle, RB1 becomes phosphorylated in mid-to-late G1 phase, detaches from the DRTF1/E2F complex, rendering E2F transcriptionally active. Interacts with TRRAP, which probably mediates its interaction with histone acetyltransferase complexes, leading to transcription activation. Binds TOPBP1 and EAPP. Interacts with ARID3A. Interacts with TRIM28; the interaction inhibits E2F1 acetylation through recruiting HDAC1 and represses its transcriptional activity. Interaction with KAT2B; the interaction acetylates E2F1 enhancing its DNA-binding and transcriptional activity. Interacts with BIRC2/c-IAP1 (via BIR domains). The complex TFDP1:E2F1 interacts with CEBPA; the interaction prevents CEBPA binding to target genes promoters and represses its transcriptional activity. Interacts with RRP1B. Interacts with HCFC1. Interacts with KMT2E; the interaction is probably indirect and is mediated via HCFC1. Interacts with DCAF5 and L3MBTL3; the interaction requires methylation at Lys-180 and is necessary to target E2F1 for ubiquitination by the CRL4-DCAF5 E3 ubiquitin ligase complex. Phosphorylated by CDK2 and cyclin A-CDK2 in the S-phase. Phosphorylation by CHEK2 stabilizes E2F1 upon DNA damage and regulates its effect on transcription and apoptosis. Phosphorylation at Ser-396 by GSK3B promotes interaction with USP11, leading to its deubiquitination and stabilization. In terms of processing, ubiquitinated via 'Lys-63'-linked ubiquitin, leading to its degradation. Deubiquitinated by USP11 following phosphorylation by GSK3B, promoting its stability. Post-translationally, acetylation stimulates DNA-binding. Enhanced under stress conditions such as DNA damage and inhibited by retinoblastoma protein RB1. Regulated by KAP1/TRIM28 which recruits HDAC1 to E2F1 resulting in deacetylation. Acetylated by P/CAF/KAT2B. Methylation at Lys-180 by SETD7 promotes E2F1 ubiquitin-dependent proteasomal degradation.

Its subcellular location is the nucleus. Its activity is regulated as follows. BIRC2/c-IAP1 stimulates its transcriptional activity. In terms of biological role, transcription activator that binds DNA cooperatively with DP proteins through the E2 recognition site, 5'-TTTC[CG]CGC-3' found in the promoter region of a number of genes whose products are involved in cell cycle regulation or in DNA replication. The DRTF1/E2F complex functions in the control of cell-cycle progression from G1 to S phase. E2F1 binds preferentially RB1 in a cell-cycle dependent manner. It can mediate both cell proliferation and TP53/p53-dependent apoptosis. Blocks adipocyte differentiation by binding to specific promoters repressing CEBPA binding to its target gene promoters. Directly activates transcription of PEG10. Positively regulates transcription of RRP1B. This is Transcription factor E2F1 from Mus musculus (Mouse).